A 297-amino-acid chain; its full sequence is Acetyl-coenzyme A carboxylase carboxyl transferase subunit beta (297 aa).

The CoA carboxyltransferase N-terminal domain maps to 27 to 296 (LWHKCPSCEA…PVETSQVTAK (270 aa)). Residues Cys31, Cys34, Cys50, and Cys53 each coordinate Zn(2+). A C4-type zinc finger spans residues 31-53 (CPSCEAVLYRPELEKTLDVCPKC).

Belongs to the AccD/PCCB family. Acetyl-CoA carboxylase is a heterohexamer composed of biotin carboxyl carrier protein (AccB), biotin carboxylase (AccC) and two subunits each of ACCase subunit alpha (AccA) and ACCase subunit beta (AccD). Requires Zn(2+) as cofactor.

It is found in the cytoplasm. It carries out the reaction N(6)-carboxybiotinyl-L-lysyl-[protein] + acetyl-CoA = N(6)-biotinyl-L-lysyl-[protein] + malonyl-CoA. The protein operates within lipid metabolism; malonyl-CoA biosynthesis; malonyl-CoA from acetyl-CoA: step 1/1. Functionally, component of the acetyl coenzyme A carboxylase (ACC) complex. Biotin carboxylase (BC) catalyzes the carboxylation of biotin on its carrier protein (BCCP) and then the CO(2) group is transferred by the transcarboxylase to acetyl-CoA to form malonyl-CoA. The protein is Acetyl-coenzyme A carboxylase carboxyl transferase subunit beta of Stutzerimonas stutzeri (strain A1501) (Pseudomonas stutzeri).